A 158-amino-acid polypeptide reads, in one-letter code: Ribonuclease H (158 aa).

One can recognise an RNase H type-1 domain in the interval 1–142; sequence MRKQVEIFTD…CDELARAAAM (142 aa). Residues aspartate 10, glutamate 48, aspartate 70, and aspartate 134 each contribute to the Mg(2+) site.

This sequence belongs to the RNase H family. As to quaternary structure, monomer. It depends on Mg(2+) as a cofactor.

Its subcellular location is the cytoplasm. It catalyses the reaction Endonucleolytic cleavage to 5'-phosphomonoester.. In terms of biological role, endonuclease that specifically degrades the RNA of RNA-DNA hybrids. The sequence is that of Ribonuclease H from Cronobacter sakazakii (strain ATCC BAA-894) (Enterobacter sakazakii).